Reading from the N-terminus, the 270-residue chain is MEKSVIIYVISDAIGETAQHIIRAVTAQFSLNKPADIRRHAFIRDEKALLETLEEAKAADGIVVQTLVQSPLAEYATDFCAQNNIPNIDLLHTLTAAVEAKTGLKSKQDPGNMRRLDSNYFDRIAAIEFAVKYDDCKDPRGLIDADIVLVGVSRTSKTPLSSFLANQNWKVANVPLVPEIPIPDELFQIPNERIIGLTTTPEKLAQIRKVRLKSIGLDESSSYSSEKRILEELEYGYDTFKKLGCQVIHVEDKAIEETAALITEIITSYH.

151-158 (GVSRTSKT) lines the ADP pocket.

The protein belongs to the pyruvate, phosphate/water dikinase regulatory protein family. PDRP subfamily.

It carries out the reaction N(tele)-phospho-L-histidyl/L-threonyl-[pyruvate, phosphate dikinase] + ADP = N(tele)-phospho-L-histidyl/O-phospho-L-threonyl-[pyruvate, phosphate dikinase] + AMP + H(+). The enzyme catalyses N(tele)-phospho-L-histidyl/O-phospho-L-threonyl-[pyruvate, phosphate dikinase] + phosphate + H(+) = N(tele)-phospho-L-histidyl/L-threonyl-[pyruvate, phosphate dikinase] + diphosphate. In terms of biological role, bifunctional serine/threonine kinase and phosphorylase involved in the regulation of the pyruvate, phosphate dikinase (PPDK) by catalyzing its phosphorylation/dephosphorylation. This is Putative pyruvate, phosphate dikinase regulatory protein 2 from Listeria welshimeri serovar 6b (strain ATCC 35897 / DSM 20650 / CCUG 15529 / CIP 8149 / NCTC 11857 / SLCC 5334 / V8).